Reading from the N-terminus, the 174-residue chain is NADH-ubiquinone oxidoreductase chain 6 (174 aa).

4 helical membrane passes run 25–45, 48–68, 82–102, and 143–163; these read SMGL…GIYV, FWFS…LFIY, FKLT…FFIL, and LITL…VKIT.

It belongs to the complex I subunit 6 family.

Its subcellular location is the mitochondrion membrane. It carries out the reaction a ubiquinone + NADH + 5 H(+)(in) = a ubiquinol + NAD(+) + 4 H(+)(out). Functionally, core subunit of the mitochondrial membrane respiratory chain NADH dehydrogenase (Complex I) that is believed to belong to the minimal assembly required for catalysis. Complex I functions in the transfer of electrons from NADH to the respiratory chain. The immediate electron acceptor for the enzyme is believed to be ubiquinone. This Anopheles gambiae (African malaria mosquito) protein is NADH-ubiquinone oxidoreductase chain 6 (mt:ND6).